Here is a 479-residue protein sequence, read N- to C-terminus: Acyltransferase easC (479 aa).

Catalysis depends on H161, which acts as the Proton acceptor.

It belongs to the plant acyltransferase family. In terms of assembly, monomer.

Its pathway is antibiotic biosynthesis. Functionally, acyltransferase; part of the gene cluster that mediates the biosynthesis of emericellamides, secondary metabolites acting as antibiotics. The biosynthesis of emericellamides initiates from the highly reducing polyketide synthase easB which catalyzes the formation of the linear polyketide chain. EasB produces several polyketides that can be further processed by the downstream enzymes. The polyketides are released from easB as linear polyketide carboxylic acids, which are converted to CoA thioesters by the acyl-CoA ligase easD. The substrates are then loaded onto the acyltransferase easC, which shuttles them to the first thiolation (T) domain of the nonribosomal peptide synthetase easA. EasA then performs condensation of the polyketides with one glycine, two alanine, one valine and one leucine residues. A last step of cyclization leads to the production of emericellamides. This Emericella nidulans (strain FGSC A4 / ATCC 38163 / CBS 112.46 / NRRL 194 / M139) (Aspergillus nidulans) protein is Acyltransferase easC.